The primary structure comprises 200 residues: Small ribosomal subunit protein uS4 (200 aa).

The disordered stretch occupies residues 21-42 (GTGKELQKRPYPPGQHGPGQRR). One can recognise an S4 RNA-binding domain in the interval 92–155 (SRLDNLVYRL…RNLQVIKEAI (64 aa)).

Belongs to the universal ribosomal protein uS4 family. In terms of assembly, part of the 30S ribosomal subunit. Contacts protein S5. The interaction surface between S4 and S5 is involved in control of translational fidelity.

One of the primary rRNA binding proteins, it binds directly to 16S rRNA where it nucleates assembly of the body of the 30S subunit. Functionally, with S5 and S12 plays an important role in translational accuracy. This chain is Small ribosomal subunit protein uS4, found in Geobacillus thermodenitrificans (strain NG80-2).